A 251-amino-acid polypeptide reads, in one-letter code: MILYEYPFNERIRTLLRLEDLFERFAFFLAQEDPREHHVALTTLFEIAEVTGRADLKSDLMKELERQRQTLAPFRGNPGIEQNALEAVLGEIEQTLANLAQMQGKTGQHLVDNEWLASIRSRAVIPGGTCKFDLPSYYAWQQWPAEQRRQDIAKWIMPLLPLRDAAAIVLRLARESGQASKVMAMQGSYQQMLSGRSYQLMQVRVPPELRVIPEASANKYMLWVRFTMQDGDVRPRAVDIDVPFHLTLCNL.

It belongs to the ZapD family. In terms of assembly, interacts with FtsZ.

The protein resides in the cytoplasm. In terms of biological role, cell division factor that enhances FtsZ-ring assembly. Directly interacts with FtsZ and promotes bundling of FtsZ protofilaments, with a reduction in FtsZ GTPase activity. The chain is Cell division protein ZapD from Burkholderia ambifaria (strain MC40-6).